The chain runs to 112 residues: Nitrogen regulatory protein P-II (112 aa).

Tyr-51 is modified (O-UMP-tyrosine).

The protein belongs to the P(II) protein family. Homotrimer. Post-translationally, uridylylated/deuridylylated by GlnD.

Functionally, P-II indirectly controls the transcription of the glutamine synthetase gene (GlnA). P-II prevents NR-II-catalyzed conversion of NR-I to NR-I-phosphate, the transcriptional activator of GlnA. When P-II is uridylylated to P-II-UMP, these events are reversed. When the ratio of Gln to 2-ketoglutarate decreases, P-II is uridylylated to P-II-UMP, which causes the deadenylation of glutamine synthetase by GlnE, so activating the enzyme. The sequence is that of Nitrogen regulatory protein P-II (glnB) from Haemophilus influenzae (strain ATCC 51907 / DSM 11121 / KW20 / Rd).